Here is a 111-residue protein sequence, read N- to C-terminus: MKHLAAYLLLTLGGKATPSAADVKAVLESVGIEADSDRLDKLISELEGKDVNELIAEGSSKLASVPSGGAGGAAAAGGAAAAGGAAEAAPEEAKEEEKEESDDDMGFGLFD.

Positions L62–D111 are disordered. Residues A76–A88 show a composition bias toward low complexity. Residue S101 is modified to Phosphoserine.

It belongs to the eukaryotic ribosomal protein P1/P2 family. As to quaternary structure, P1 and P2 exist as dimers at the large ribosomal subunit.

Plays an important role in the elongation step of protein synthesis. This chain is Large ribosomal subunit protein P2, found in Podospora anserina (Pleurage anserina).